Consider the following 1089-residue polypeptide: Platelet-derived growth factor receptor alpha (1089 aa).

Positions 1–24 (MGTSHQVFLVLSCLLTGPGLISCQ) are cleaved as a signal peptide. 5 consecutive Ig-like C2-type domains span residues 25–113 (LLLP…SEIE), 117–201 (IYIY…FKTS), 202–306 (EFNV…KRVT), 319–410 (PTFG…FELS), and 414–517 (PASI…LKLV). Residues 25 to 528 (LLLPSILPNE…PTLRSELTVA (504 aa)) lie on the Extracellular side of the membrane. N-linked (GlcNAc...) asparagine glycans are attached at residues N42, N76, N89, N103, and N179. C49 and C100 are oxidised to a cystine. 2 disulfides stabilise this stretch: C150/C189 and C235/C290. N-linked (GlcNAc...) asparagine glycosylation is found at N353, N359, N458, N468, and N506. The cysteines at positions 435 and 501 are disulfide-linked. Residues 529-549 (AAVLVLLVIVIVSLIVLVVIW) traverse the membrane as a helical segment. The Cytoplasmic portion of the chain corresponds to 550–1089 (KQKPRYEIRW…SSDLVEDSFL (540 aa)). A phosphotyrosine; by autocatalysis mark is found at Y572 and Y574. The Protein kinase domain occupies 593-954 (LVLGRILGSG…HLSEIVENLL (362 aa)). Residues 599 to 607 (LGSGAFGKV) and K627 each bind ATP. Residues Y720, Y731, Y742, Y754, Y762, and Y768 each carry the phosphotyrosine; by autocatalysis modification. The Proton acceptor role is filled by D818. Y849, Y988, and Y1018 each carry phosphotyrosine; by autocatalysis. Residues 1018-1089 (YIIPLPDIDP…SSDLVEDSFL (72 aa)) are disordered. Residues 1041–1059 (SSQTSEESAIETGSSSSTF) show a composition bias toward polar residues. The segment covering 1065-1089 (ETIEDIDMMDDIGIDSSDLVEDSFL) has biased composition (acidic residues).

Belongs to the protein kinase superfamily. Tyr protein kinase family. CSF-1/PDGF receptor subfamily. Interacts with homodimeric PDGFA, PDGFB and PDGFC, and with heterodimers formed by PDGFA and PDGFB. Monomer in the absence of bound ligand. Interaction with dimeric PDGFA, PDGFB and/or PDGFC leads to receptor dimerization, where both PDGFRA homodimers and heterodimers with PDGFRB are observed. Interacts (tyrosine phosphorylated) with SHB (via SH2 domain). Interacts (tyrosine phosphorylated) with SHF (via SH2 domain). Interacts (tyrosine phosphorylated) with SRC (via SH2 domain). Interacts (tyrosine phosphorylated) with PIK3R1. Interacts (tyrosine phosphorylated) with PLCG1 (via SH2 domain). Interacts (tyrosine phosphorylated) with CRK, GRB2 and GRB7. Interacts with CD248; this interaction promotes PDGF receptor signaling pathway. Ubiquitinated, leading to its internalization and degradation. Post-translationally, autophosphorylated on tyrosine residues upon ligand binding. Autophosphorylation occurs in trans, i.e. one subunit of the dimeric receptor phosphorylates tyrosine residues on the other subunit. Phosphorylation at Tyr-731 and Tyr-742 is important for interaction with PIK3R1. Phosphorylation at Tyr-720 and Tyr-754 is important for interaction with PTPN11. Phosphorylation at Tyr-762 is important for interaction with CRK. Phosphorylation at Tyr-572 and Tyr-574 is important for interaction with SRC and SRC family members. Phosphorylation at Tyr-988 and Tyr-1018 is important for interaction with PLCG1. As to expression, focally expressed in cortical interstitial cells and highly expressed in the interstitium of the papillary region. Also expressed by adventitial cells in arterial vessels. Up-regulated in areas of renal fibrosis. In mice with unilateral ureteral obstruction, expression in cortical interstitial cells becomes prominent at day 4 which increases progressively until day 14.

It is found in the cell membrane. It localises to the cell projection. The protein resides in the cilium. Its subcellular location is the golgi apparatus. The catalysed reaction is L-tyrosyl-[protein] + ATP = O-phospho-L-tyrosyl-[protein] + ADP + H(+). Its activity is regulated as follows. Present in an inactive conformation in the absence of bound ligand. Binding of PDGFA and/or PDGFB leads to dimerization and activation by autophosphorylation on tyrosine residues. Inhibited by imatinib, nilotinib and sorafenib. Functionally, tyrosine-protein kinase that acts as a cell-surface receptor for PDGFA, PDGFB and PDGFC and plays an essential role in the regulation of embryonic development, cell proliferation, survival and chemotaxis. Depending on the context, promotes or inhibits cell proliferation and cell migration. Plays an important role in the differentiation of bone marrow-derived mesenchymal stem cells. Required for normal skeleton development and cephalic closure during embryonic development. Required for normal development of the mucosa lining the gastrointestinal tract, and for recruitment of mesenchymal cells and normal development of intestinal villi. Plays a role in cell migration and chemotaxis in wound healing. Plays a role in platelet activation, secretion of agonists from platelet granules, and in thrombin-induced platelet aggregation. Binding of its cognate ligands - homodimeric PDGFA, homodimeric PDGFB, heterodimers formed by PDGFA and PDGFB or homodimeric PDGFC -leads to the activation of several signaling cascades; the response depends on the nature of the bound ligand and is modulated by the formation of heterodimers between PDGFRA and PDGFRB. Phosphorylates PIK3R1, PLCG1, and PTPN11. Activation of PLCG1 leads to the production of the cellular signaling molecules diacylglycerol and inositol 1,4,5-trisphosphate, mobilization of cytosolic Ca(2+) and the activation of protein kinase C. Phosphorylates PIK3R1, the regulatory subunit of phosphatidylinositol 3-kinase, and thereby mediates activation of the AKT1 signaling pathway. Mediates activation of HRAS and of the MAP kinases MAPK1/ERK2 and/or MAPK3/ERK1. Promotes activation of STAT family members STAT1, STAT3 and STAT5A and/or STAT5B. Receptor signaling is down-regulated by protein phosphatases that dephosphorylate the receptor and its down-stream effectors, and by rapid internalization of the activated receptor. The polypeptide is Platelet-derived growth factor receptor alpha (Pdgfra) (Mus musculus (Mouse)).